We begin with the raw amino-acid sequence, 223 residues long: Small ribosomal subunit protein uS5 (223 aa).

Positions 1-66 are disordered; it reads MPPQQQRGRG…AERAQAETEF (66 aa). Residues 13–22 are compositionally biased toward gly residues; that stretch reads RGPGGPGGPG. The span at 53 to 66 shows a compositional bias: basic and acidic residues; that stretch reads GGDKAERAQAETEF. Positions 66 to 129 constitute an S5 DRBM domain; it reads FQERVVQIRR…SDARKALIRV (64 aa).

The protein belongs to the universal ribosomal protein uS5 family. As to quaternary structure, part of the 30S ribosomal subunit. Contacts proteins S4 and S8.

Its function is as follows. With S4 and S12 plays an important role in translational accuracy. Functionally, located at the back of the 30S subunit body where it stabilizes the conformation of the head with respect to the body. This is Small ribosomal subunit protein uS5 from Gloeobacter violaceus (strain ATCC 29082 / PCC 7421).